The primary structure comprises 214 residues: ATP phosphoribosyltransferase (214 aa).

This sequence belongs to the ATP phosphoribosyltransferase family. Short subfamily. In terms of assembly, heteromultimer composed of HisG and HisZ subunits.

It localises to the cytoplasm. The catalysed reaction is 1-(5-phospho-beta-D-ribosyl)-ATP + diphosphate = 5-phospho-alpha-D-ribose 1-diphosphate + ATP. It functions in the pathway amino-acid biosynthesis; L-histidine biosynthesis; L-histidine from 5-phospho-alpha-D-ribose 1-diphosphate: step 1/9. In terms of biological role, catalyzes the condensation of ATP and 5-phosphoribose 1-diphosphate to form N'-(5'-phosphoribosyl)-ATP (PR-ATP). Has a crucial role in the pathway because the rate of histidine biosynthesis seems to be controlled primarily by regulation of HisG enzymatic activity. The sequence is that of ATP phosphoribosyltransferase from Azoarcus sp. (strain BH72).